The primary structure comprises 289 residues: Caffeoylpyruvate hydrolase (289 aa).

Positions 140, 142, and 171 each coordinate a divalent metal cation.

The protein belongs to the FAH family. Homodimer. Requires Mg(2+) as cofactor. It depends on Mn(2+) as a cofactor.

The catalysed reaction is (E)-caffeoylpyruvate + H2O = (E)-caffeate + pyruvate + H(+). It functions in the pathway secondary metabolite biosynthesis. Its function is as follows. Caffeoylpyruvate hydrolase; part of the gene cluster that mediates the fungal bioluminescence cycle. Involved in the recycling of oxyluciferin, a pyruvic acid adduct of caffeic acid, to caffeic acid. The fungal bioluminescence cycle begins with the hispidin synthetase that catalyzes the formation of hispidin which is further hydroxylated by the hispidin-3-hydroxylase, yielding the fungal luciferin 3-hydroxyhispidin. The luciferase then produces an endoperoxide as a high-energy intermediate with decomposition that yields oxyluciferin (also known as caffeoylpyruvate) and light emission. Oxyluciferin can be recycled to caffeic acid by caffeoylpyruvate hydrolase. The protein is Caffeoylpyruvate hydrolase of Neonothopanus nambi (Agaricus nambi).